The chain runs to 878 residues: Alanine--tRNA ligase (878 aa).

His-562, His-566, Cys-670, and His-674 together coordinate Zn(2+).

This sequence belongs to the class-II aminoacyl-tRNA synthetase family. Zn(2+) serves as cofactor.

The protein localises to the cytoplasm. The enzyme catalyses tRNA(Ala) + L-alanine + ATP = L-alanyl-tRNA(Ala) + AMP + diphosphate. Functionally, catalyzes the attachment of alanine to tRNA(Ala) in a two-step reaction: alanine is first activated by ATP to form Ala-AMP and then transferred to the acceptor end of tRNA(Ala). Also edits incorrectly charged Ser-tRNA(Ala) and Gly-tRNA(Ala) via its editing domain. The chain is Alanine--tRNA ligase from Acinetobacter baumannii (strain ACICU).